The following is a 385-amino-acid chain: Serine/threonine-protein kinase H2 (385 aa).

The Protein kinase domain maps to 63 to 320 (YDIKALIGTG…AGQALDHPWV (258 aa)). ATP-binding positions include 69–77 (IGTGSFSRV) and K92. The interval 342-367 (QRASPHSQSPGSAQSSKSHYSHKSRH) is disordered. Over residues 344–359 (ASPHSQSPGSAQSSKS) the composition is skewed to low complexity.

This sequence belongs to the protein kinase superfamily. CAMK Ser/Thr protein kinase family.

It catalyses the reaction L-seryl-[protein] + ATP = O-phospho-L-seryl-[protein] + ADP + H(+). The catalysed reaction is L-threonyl-[protein] + ATP = O-phospho-L-threonyl-[protein] + ADP + H(+). This chain is Serine/threonine-protein kinase H2 (PSKH2), found in Homo sapiens (Human).